Here is a 153-residue protein sequence, read N- to C-terminus: Prostaglandin E synthase (153 aa).

Topologically, residues 1-13 (MPPPVLALVSGQA) are lumenal. A helical transmembrane segment spans residues 14-42 (LPAFLLCSTLLVIKMYVVAVITGQVRLRK). Arg39 is a binding site for glutathione. Residues 43-61 (KAFANPEDALRHGGLQYCR) are Cytoplasmic-facing. A helical transmembrane segment spans residues 62–91 (SDQDVDRCLRAHRNDMETIYPFLFLGFVYS). 74 to 78 (RNDME) serves as a coordination point for glutathione. At 92 to 96 (FLGPD) the chain is on the lumenal side. A helical transmembrane segment spans residues 97-120 (PFIAQMHFLVFFLGRMVHTVAYLG). The glutathione site is built by His114 and Tyr118. Residues 121-124 (KLRA) lie on the Cytoplasmic side of the membrane. Residues 125 to 153 (PTRSLAYTVAQLPCASMALQIVWEAACHL) form a helical membrane-spanning segment. 127–131 (RSLAY) is a glutathione binding site.

It belongs to the MAPEG family. In terms of assembly, homotrimer. It depends on glutathione as a cofactor.

The protein localises to the membrane. It is found in the cytoplasm. Its subcellular location is the perinuclear region. The enzyme catalyses prostaglandin H2 = prostaglandin E2. The catalysed reaction is 2-glyceryl-prostaglandin H2 = 2-glyceryl-prostaglandin E2. It catalyses the reaction prostaglandin G2 = (15S)-15-hydroperoxy-prostaglandin E2. It carries out the reaction 1-chloro-2,4-dinitrobenzene + glutathione = 2,4-dinitrophenyl-S-glutathione + chloride + H(+). The enzyme catalyses (5S)-hydroperoxy-(6E,8Z,11Z,14Z)-eicosatetraenoate + 2 glutathione = (5S)-hydroxy-(6E,8Z,11Z,14Z)-eicosatetraenoate + glutathione disulfide + H2O. It functions in the pathway lipid metabolism; prostaglandin biosynthesis. Functionally, terminal enzyme of the cyclooxygenase (COX)-2-mediated prostaglandin E2 (PGE2) biosynthetic pathway. Catalyzes the glutathione-dependent oxidoreduction of prostaglandin endoperoxide H2 (PGH2) to prostaglandin E2 (PGE2) in response to inflammatory stimuli. Plays a key role in inflammation response, fever and pain. Also catalyzes the oxidoreduction of endocannabinoids into prostaglandin glycerol esters and PGG2 into 15-hydroperoxy-PGE2. In addition, displays low glutathione transferase and glutathione-dependent peroxidase activities, toward 1-chloro-2,4-dinitrobenzene and 5-hydroperoxyicosatetraenoic acid (5-HPETE), respectively. This is Prostaglandin E synthase (PTGES) from Canis lupus familiaris (Dog).